The sequence spans 239 residues: 1-(5-phosphoribosyl)-5-[(5-phosphoribosylamino)methylideneamino] imidazole-4-carboxamide isomerase (239 aa).

Aspartate 9 functions as the Proton acceptor in the catalytic mechanism. The Proton donor role is filled by aspartate 131.

This sequence belongs to the HisA/HisF family.

It is found in the cytoplasm. It carries out the reaction 1-(5-phospho-beta-D-ribosyl)-5-[(5-phospho-beta-D-ribosylamino)methylideneamino]imidazole-4-carboxamide = 5-[(5-phospho-1-deoxy-D-ribulos-1-ylimino)methylamino]-1-(5-phospho-beta-D-ribosyl)imidazole-4-carboxamide. It participates in amino-acid biosynthesis; L-histidine biosynthesis; L-histidine from 5-phospho-alpha-D-ribose 1-diphosphate: step 4/9. This chain is 1-(5-phosphoribosyl)-5-[(5-phosphoribosylamino)methylideneamino] imidazole-4-carboxamide isomerase, found in Phocaeicola vulgatus (strain ATCC 8482 / DSM 1447 / JCM 5826 / CCUG 4940 / NBRC 14291 / NCTC 11154) (Bacteroides vulgatus).